Consider the following 214-residue polypeptide: Redox-sensing transcriptional repressor Rex (214 aa).

The segment at residues Leu-18–Phe-57 is a DNA-binding region (H-T-H motif). Residue Gly-92 to Gly-97 coordinates NAD(+).

It belongs to the transcriptional regulatory Rex family. In terms of assembly, homodimer.

The protein resides in the cytoplasm. Modulates transcription in response to changes in cellular NADH/NAD(+) redox state. In Staphylococcus carnosus (strain TM300), this protein is Redox-sensing transcriptional repressor Rex.